A 102-amino-acid polypeptide reads, in one-letter code: Co-chaperonin GroES (102 aa).

It belongs to the GroES chaperonin family. Heptamer of 7 subunits arranged in a ring. Interacts with the chaperonin GroEL.

The protein localises to the cytoplasm. Its function is as follows. Together with the chaperonin GroEL, plays an essential role in assisting protein folding. The GroEL-GroES system forms a nano-cage that allows encapsulation of the non-native substrate proteins and provides a physical environment optimized to promote and accelerate protein folding. GroES binds to the apical surface of the GroEL ring, thereby capping the opening of the GroEL channel. This Vibrio harveyi (Beneckea harveyi) protein is Co-chaperonin GroES.